Reading from the N-terminus, the 178-residue chain is ATP synthase subunit delta (178 aa).

It belongs to the ATPase delta chain family. As to quaternary structure, F-type ATPases have 2 components, F(1) - the catalytic core - and F(0) - the membrane proton channel. F(1) has five subunits: alpha(3), beta(3), gamma(1), delta(1), epsilon(1). F(0) has three main subunits: a(1), b(2) and c(10-14). The alpha and beta chains form an alternating ring which encloses part of the gamma chain. F(1) is attached to F(0) by a central stalk formed by the gamma and epsilon chains, while a peripheral stalk is formed by the delta and b chains.

It localises to the cell inner membrane. Its function is as follows. F(1)F(0) ATP synthase produces ATP from ADP in the presence of a proton or sodium gradient. F-type ATPases consist of two structural domains, F(1) containing the extramembraneous catalytic core and F(0) containing the membrane proton channel, linked together by a central stalk and a peripheral stalk. During catalysis, ATP synthesis in the catalytic domain of F(1) is coupled via a rotary mechanism of the central stalk subunits to proton translocation. In terms of biological role, this protein is part of the stalk that links CF(0) to CF(1). It either transmits conformational changes from CF(0) to CF(1) or is implicated in proton conduction. The sequence is that of ATP synthase subunit delta from Pseudomonas fluorescens (strain ATCC BAA-477 / NRRL B-23932 / Pf-5).